Consider the following 248-residue polypeptide: 14-3-3 protein homolog 2 (248 aa).

This sequence belongs to the 14-3-3 family.

The polypeptide is 14-3-3 protein homolog 2 (Echinococcus granulosus (Hydatid tapeworm)).